The chain runs to 251 residues: MAIHADTHDDLRLFQTGEHACGYWSDRQARDLVLDPHDPRLGAIYPQALAWGFRRSGDLVYRPHCERCRACVPVRIAVAAFHPDRSQRRCLARNQDLVVRVVAAERTDEQLALYRHYLKHRHPGGGMDEHGATEFDQFLIGGWSHGRFLEIREPAIAHLPGRLLAVAVTDVTGHALSAVYTFYTPEAAARSLGTFAILQQIQWAQRERRAHLYLGYWIDGHAKMNYKRRFSALEAYDGRHWRGLPAHASVD.

This sequence belongs to the R-transferase family. Bpt subfamily.

The protein resides in the cytoplasm. The catalysed reaction is N-terminal L-glutamyl-[protein] + L-leucyl-tRNA(Leu) = N-terminal L-leucyl-L-glutamyl-[protein] + tRNA(Leu) + H(+). It catalyses the reaction N-terminal L-aspartyl-[protein] + L-leucyl-tRNA(Leu) = N-terminal L-leucyl-L-aspartyl-[protein] + tRNA(Leu) + H(+). Its function is as follows. Functions in the N-end rule pathway of protein degradation where it conjugates Leu from its aminoacyl-tRNA to the N-termini of proteins containing an N-terminal aspartate or glutamate. The polypeptide is Aspartate/glutamate leucyltransferase (Xanthomonas euvesicatoria pv. vesicatoria (strain 85-10) (Xanthomonas campestris pv. vesicatoria)).